The sequence spans 441 residues: MFS-type transporter (441 aa).

Residues Met1–Ile47 form a disordered region. Helical transmembrane passes span Thr61 to Phe81, Asp95 to Gly115, Leu125 to Thr145, Leu150 to Val170, Leu183 to Ala203, Phe212 to Val232, Phe259 to Ala279, Thr289 to Gly309, Leu323 to Val343, and Val351 to Ile371. Residue Asn388 is glycosylated (N-linked (GlcNAc...) asparagine). The next 2 membrane-spanning stretches (helical) occupy residues Phe389–Ala409 and Tyr415–Ala435.

The protein belongs to the major facilitator superfamily. Monocarboxylate porter (TC 2.A.1.13) family.

It localises to the membrane. Its function is as follows. MFS-type transporter; part of the gene cluster that mediates the biosynthesis of butenolide, a mycotoxin that shows antibiotic activity but does not seem to play a major role in the spread of head blight in wheat. The protein is MFS-type transporter of Gibberella zeae (strain ATCC MYA-4620 / CBS 123657 / FGSC 9075 / NRRL 31084 / PH-1) (Wheat head blight fungus).